We begin with the raw amino-acid sequence, 193 residues long: Flagellar transcriptional regulator FlhC (193 aa).

Cysteine 138, cysteine 141, cysteine 158, and cysteine 161 together coordinate Zn(2+).

This sequence belongs to the FlhC family. As to quaternary structure, heterohexamer composed of two FlhC and four FlhD subunits. Each FlhC binds a FlhD dimer, forming a heterotrimer, and a hexamer assembles by dimerization of two heterotrimers. It depends on Zn(2+) as a cofactor.

The protein localises to the cytoplasm. Functionally, functions in complex with FlhD as a master transcriptional regulator that regulates transcription of several flagellar and non-flagellar operons by binding to their promoter region. Activates expression of class 2 flagellar genes, including fliA, which is a flagellum-specific sigma factor that turns on the class 3 genes. Also regulates genes whose products function in a variety of physiological pathways. This is Flagellar transcriptional regulator FlhC from Proteus mirabilis.